A 447-amino-acid chain; its full sequence is Phosphoglucosamine mutase (447 aa).

Catalysis depends on S101, which acts as the Phosphoserine intermediate. Positions 101, 242, 244, and 246 each coordinate Mg(2+). S101 carries the phosphoserine modification.

The protein belongs to the phosphohexose mutase family. Requires Mg(2+) as cofactor. Activated by phosphorylation.

It carries out the reaction alpha-D-glucosamine 1-phosphate = D-glucosamine 6-phosphate. Catalyzes the conversion of glucosamine-6-phosphate to glucosamine-1-phosphate. The sequence is that of Phosphoglucosamine mutase from Azorhizobium caulinodans (strain ATCC 43989 / DSM 5975 / JCM 20966 / LMG 6465 / NBRC 14845 / NCIMB 13405 / ORS 571).